Reading from the N-terminus, the 440-residue chain is tRNA(Ile)-lysidine synthase (440 aa).

ATP is bound at residue 31–36; it reads SGGADS.

This sequence belongs to the tRNA(Ile)-lysidine synthase family.

The protein localises to the cytoplasm. It catalyses the reaction cytidine(34) in tRNA(Ile2) + L-lysine + ATP = lysidine(34) in tRNA(Ile2) + AMP + diphosphate + H(+). Functionally, ligates lysine onto the cytidine present at position 34 of the AUA codon-specific tRNA(Ile) that contains the anticodon CAU, in an ATP-dependent manner. Cytidine is converted to lysidine, thus changing the amino acid specificity of the tRNA from methionine to isoleucine. This Borreliella afzelii (strain PKo) (Borrelia afzelii) protein is tRNA(Ile)-lysidine synthase.